A 103-amino-acid chain; its full sequence is Pyrimidine/purine nucleoside phosphorylase (103 aa).

This sequence belongs to the nucleoside phosphorylase PpnP family.

The catalysed reaction is a purine D-ribonucleoside + phosphate = a purine nucleobase + alpha-D-ribose 1-phosphate. The enzyme catalyses adenosine + phosphate = alpha-D-ribose 1-phosphate + adenine. It carries out the reaction cytidine + phosphate = cytosine + alpha-D-ribose 1-phosphate. It catalyses the reaction guanosine + phosphate = alpha-D-ribose 1-phosphate + guanine. The catalysed reaction is inosine + phosphate = alpha-D-ribose 1-phosphate + hypoxanthine. The enzyme catalyses thymidine + phosphate = 2-deoxy-alpha-D-ribose 1-phosphate + thymine. It carries out the reaction uridine + phosphate = alpha-D-ribose 1-phosphate + uracil. It catalyses the reaction xanthosine + phosphate = alpha-D-ribose 1-phosphate + xanthine. In terms of biological role, catalyzes the phosphorolysis of diverse nucleosides, yielding D-ribose 1-phosphate and the respective free bases. Can use uridine, adenosine, guanosine, cytidine, thymidine, inosine and xanthosine as substrates. Also catalyzes the reverse reactions. This is Pyrimidine/purine nucleoside phosphorylase from Shewanella sp. (strain W3-18-1).